The following is a 272-amino-acid chain: 2,3,4,5-tetrahydropyridine-2,6-dicarboxylate N-succinyltransferase (272 aa).

Residues Arg-104 and Asp-141 each contribute to the substrate site.

It belongs to the transferase hexapeptide repeat family. As to quaternary structure, homotrimer.

It is found in the cytoplasm. The enzyme catalyses (S)-2,3,4,5-tetrahydrodipicolinate + succinyl-CoA + H2O = (S)-2-succinylamino-6-oxoheptanedioate + CoA. Its pathway is amino-acid biosynthesis; L-lysine biosynthesis via DAP pathway; LL-2,6-diaminopimelate from (S)-tetrahydrodipicolinate (succinylase route): step 1/3. This is 2,3,4,5-tetrahydropyridine-2,6-dicarboxylate N-succinyltransferase from Alkalilimnicola ehrlichii (strain ATCC BAA-1101 / DSM 17681 / MLHE-1).